The primary structure comprises 108 residues: uncharacterized protein (108 aa).

Residues 64–84 (LFIIYYYYYLLICLSPHFFPI) traverse the membrane as a helical segment.

Its subcellular location is the membrane. This is an uncharacterized protein from Schizosaccharomyces pombe (strain 972 / ATCC 24843) (Fission yeast).